The chain runs to 704 residues: Elongation factor G (704 aa).

In terms of domain architecture, tr-type G spans 8 to 291 (DKVRNIGIMA…AVIDYLASPV (284 aa)). GTP-binding positions include 17-24 (AHIDAGKT), 90-94 (DTPGH), and 144-147 (NKMD).

Belongs to the TRAFAC class translation factor GTPase superfamily. Classic translation factor GTPase family. EF-G/EF-2 subfamily.

It is found in the cytoplasm. In terms of biological role, catalyzes the GTP-dependent ribosomal translocation step during translation elongation. During this step, the ribosome changes from the pre-translocational (PRE) to the post-translocational (POST) state as the newly formed A-site-bound peptidyl-tRNA and P-site-bound deacylated tRNA move to the P and E sites, respectively. Catalyzes the coordinated movement of the two tRNA molecules, the mRNA and conformational changes in the ribosome. The protein is Elongation factor G of Chlorobaculum parvum (strain DSM 263 / NCIMB 8327) (Chlorobium vibrioforme subsp. thiosulfatophilum).